The sequence spans 517 residues: Zinc finger protein 215 (517 aa).

The region spanning 48-126 (RQKFRHFQYL…EDMVTLIEDV (79 aa)) is the SCAN box domain. The KRAB domain maps to 164–237 (VTFKDVVVEF…EKEIPRKTIF (74 aa)). 4 C2H2-type zinc fingers span residues 379–401 (YECY…QIIH), 407–429 (YKCS…QKLH), 462–484 (YECV…QMIH), and 490–512 (FKCK…QKLH).

The protein belongs to the krueppel C2H2-type zinc-finger protein family.

Its subcellular location is the nucleus. Functionally, may be involved in transcriptional regulation. This is Zinc finger protein 215 (ZNF215) from Pongo abelii (Sumatran orangutan).